The following is a 239-amino-acid chain: Small ribosomal subunit protein uS2 (239 aa).

The protein belongs to the universal ribosomal protein uS2 family.

The chain is Small ribosomal subunit protein uS2 from Francisella tularensis subsp. holarctica (strain FTNF002-00 / FTA).